A 501-amino-acid polypeptide reads, in one-letter code: Glutamate--tRNA ligase (501 aa).

A 'HIGH' region motif is present at residues 10-20 (PSPTGSLHIGG). The 'KMSKS' region motif lies at 251–255 (KLSKR). Residue Lys-254 participates in ATP binding.

The protein belongs to the class-I aminoacyl-tRNA synthetase family. Glutamate--tRNA ligase type 1 subfamily. As to quaternary structure, monomer.

It localises to the cytoplasm. It carries out the reaction tRNA(Glu) + L-glutamate + ATP = L-glutamyl-tRNA(Glu) + AMP + diphosphate. In terms of biological role, catalyzes the attachment of glutamate to tRNA(Glu) in a two-step reaction: glutamate is first activated by ATP to form Glu-AMP and then transferred to the acceptor end of tRNA(Glu). This Desulforudis audaxviator (strain MP104C) protein is Glutamate--tRNA ligase.